Here is a 263-residue protein sequence, read N- to C-terminus: Microtubule-associated protein RP/EB family member 1 (263 aa).

Positions 14 to 116 (NLSRHDMLAW…FVQWFKKFFD (103 aa)) constitute a Calponin-homology (CH) domain. A disordered region spans residues 150–182 (KPLGTGSAGPQRPIVAQRTPATPKGGTGMVKKA). Residues 180–250 (KKAAGDDESA…LYATDEGFVI (71 aa)) form the EB1 C-terminal domain.

The protein belongs to the MAPRE family.

It localises to the cytoplasm. It is found in the cytoskeleton. The protein localises to the microtubule organizing center. The protein resides in the centrosome. Its subcellular location is the golgi apparatus. It localises to the spindle. It is found in the spindle pole. Its function is as follows. Plus-end tracking protein (+TIP) that binds to the plus-end of microtubules and regulates the dynamics of the microtubule cytoskeleton. Promotes cytoplasmic microtubule nucleation and elongation. Involved in mitotic spindle positioning by stabilizing microtubules and promoting dynamic connection between astral microtubules and the cortex during mitotic chromosome segregation. The protein is Microtubule-associated protein RP/EB family member 1 (MAPRE1) of Coturnix japonica (Japanese quail).